Here is a 250-residue protein sequence, read N- to C-terminus: Pyrroloquinoline-quinone synthase (250 aa).

This sequence belongs to the PqqC family.

The catalysed reaction is 6-(2-amino-2-carboxyethyl)-7,8-dioxo-1,2,3,4,7,8-hexahydroquinoline-2,4-dicarboxylate + 3 O2 = pyrroloquinoline quinone + 2 H2O2 + 2 H2O + H(+). Its pathway is cofactor biosynthesis; pyrroloquinoline quinone biosynthesis. In terms of biological role, ring cyclization and eight-electron oxidation of 3a-(2-amino-2-carboxyethyl)-4,5-dioxo-4,5,6,7,8,9-hexahydroquinoline-7,9-dicarboxylic-acid to PQQ. The protein is Pyrroloquinoline-quinone synthase of Xanthomonas oryzae pv. oryzae (strain MAFF 311018).